Consider the following 167-residue polypeptide: Ribosome maturation factor RimM (167 aa).

Residues 94 to 165 (EHEYYYSDII…TIKITPMEGL (72 aa)) enclose the PRC barrel domain.

This sequence belongs to the RimM family. In terms of assembly, binds ribosomal protein uS19.

Its subcellular location is the cytoplasm. An accessory protein needed during the final step in the assembly of 30S ribosomal subunit, possibly for assembly of the head region. Essential for efficient processing of 16S rRNA. May be needed both before and after RbfA during the maturation of 16S rRNA. It has affinity for free ribosomal 30S subunits but not for 70S ribosomes. The polypeptide is Ribosome maturation factor RimM (Staphylococcus epidermidis (strain ATCC 35984 / DSM 28319 / BCRC 17069 / CCUG 31568 / BM 3577 / RP62A)).